The chain runs to 293 residues: Large ribosomal subunit protein uL4c (293 aa).

Residues 1–50 (MATSTSSSLSLSFFSSSLFSSKSRNFSSKPILKLPSSSHSQTSLSLSIKS) constitute a chloroplast transit peptide. Disordered regions lie at residues 107-138 (EVRGGGRKPYPQKKTGRARRGSQGSPLRPGGG) and 259-293 (YGVDTLEDEDEEEEEEEEGEEVDDGVEDGTPEPAE). Residues 116 to 126 (YPQKKTGRARR) are compositionally biased toward basic residues. The segment covering 263-293 (TLEDEDEEEEEEEEGEEVDDGVEDGTPEPAE) has biased composition (acidic residues).

Belongs to the universal ribosomal protein uL4 family. As to quaternary structure, component of the chloroplast large ribosomal subunit (LSU). Mature 70S chloroplast ribosomes of higher plants consist of a small (30S) and a large (50S) subunit. The 30S small subunit contains 1 molecule of ribosomal RNA (16S rRNA) and 24 different proteins. The 50S large subunit contains 3 rRNA molecules (23S, 5S and 4.5S rRNA) and 33 different proteins. In terms of tissue distribution, highly expressed in cotyledon and weakly in roots.

It is found in the plastid. It localises to the chloroplast. In terms of biological role, component of the chloroplast ribosome (chloro-ribosome), a dedicated translation machinery responsible for the synthesis of chloroplast genome-encoded proteins, including proteins of the transcription and translation machinery and components of the photosynthetic apparatus. This is Large ribosomal subunit protein uL4c (RPL4) from Spinacia oleracea (Spinach).